A 340-amino-acid polypeptide reads, in one-letter code: S-adenosylmethionine:tRNA ribosyltransferase-isomerase (340 aa).

This sequence belongs to the QueA family. In terms of assembly, monomer.

The protein resides in the cytoplasm. The enzyme catalyses 7-aminomethyl-7-carbaguanosine(34) in tRNA + S-adenosyl-L-methionine = epoxyqueuosine(34) in tRNA + adenine + L-methionine + 2 H(+). It participates in tRNA modification; tRNA-queuosine biosynthesis. Transfers and isomerizes the ribose moiety from AdoMet to the 7-aminomethyl group of 7-deazaguanine (preQ1-tRNA) to give epoxyqueuosine (oQ-tRNA). This is S-adenosylmethionine:tRNA ribosyltransferase-isomerase from Vesicomyosocius okutanii subsp. Calyptogena okutanii (strain HA).